We begin with the raw amino-acid sequence, 121 residues long: Large ribosomal subunit protein bL12 (121 aa).

Belongs to the bacterial ribosomal protein bL12 family. In terms of assembly, homodimer. Part of the ribosomal stalk of the 50S ribosomal subunit. Forms a multimeric L10(L12)X complex, where L10 forms an elongated spine to which 2 to 4 L12 dimers bind in a sequential fashion. Binds GTP-bound translation factors.

Its function is as follows. Forms part of the ribosomal stalk which helps the ribosome interact with GTP-bound translation factors. Is thus essential for accurate translation. The protein is Large ribosomal subunit protein bL12 of Pseudomonas fluorescens (strain ATCC BAA-477 / NRRL B-23932 / Pf-5).